The chain runs to 158 residues: Putative pre-16S rRNA nuclease (158 aa).

This sequence belongs to the YqgF nuclease family.

It is found in the cytoplasm. Functionally, could be a nuclease involved in processing of the 5'-end of pre-16S rRNA. This Hahella chejuensis (strain KCTC 2396) protein is Putative pre-16S rRNA nuclease.